The sequence spans 563 residues: NAD-dependent malic enzyme (563 aa).

Residue tyrosine 101 is the Proton donor of the active site. Arginine 154 serves as a coordination point for NAD(+). Lysine 172 (proton acceptor) is an active-site residue. A divalent metal cation is bound by residues glutamate 243, aspartate 244, and aspartate 267. The NAD(+) site is built by aspartate 267 and asparagine 416.

The protein belongs to the malic enzymes family. As to quaternary structure, homotetramer. Requires Mg(2+) as cofactor. Mn(2+) is required as a cofactor.

The catalysed reaction is (S)-malate + NAD(+) = pyruvate + CO2 + NADH. The enzyme catalyses oxaloacetate + H(+) = pyruvate + CO2. The chain is NAD-dependent malic enzyme from Pseudomonas syringae pv. tomato (strain ATCC BAA-871 / DC3000).